The sequence spans 183 residues: Acireductone dioxygenase (183 aa).

Residues H99, H101, E105, and H144 each contribute to the Fe(2+) site. The Ni(2+) site is built by H99, H101, E105, and H144.

The protein belongs to the acireductone dioxygenase (ARD) family. Monomer. Fe(2+) serves as cofactor. The cofactor is Ni(2+).

The catalysed reaction is 1,2-dihydroxy-5-(methylsulfanyl)pent-1-en-3-one + O2 = 3-(methylsulfanyl)propanoate + CO + formate + 2 H(+). The enzyme catalyses 1,2-dihydroxy-5-(methylsulfanyl)pent-1-en-3-one + O2 = 4-methylsulfanyl-2-oxobutanoate + formate + 2 H(+). The protein operates within amino-acid biosynthesis; L-methionine biosynthesis via salvage pathway; L-methionine from S-methyl-5-thio-alpha-D-ribose 1-phosphate: step 5/6. In terms of biological role, catalyzes 2 different reactions between oxygen and the acireductone 1,2-dihydroxy-3-keto-5-methylthiopentene (DHK-MTPene) depending upon the metal bound in the active site. Fe-containing acireductone dioxygenase (Fe-ARD) produces formate and 2-keto-4-methylthiobutyrate (KMTB), the alpha-ketoacid precursor of methionine in the methionine recycle pathway. Ni-containing acireductone dioxygenase (Ni-ARD) produces methylthiopropionate, carbon monoxide and formate, and does not lie on the methionine recycle pathway. This is Acireductone dioxygenase from Microcystis aeruginosa (strain NIES-843 / IAM M-2473).